The chain runs to 92 residues: Small ribosomal subunit protein uS19 (92 aa).

This sequence belongs to the universal ribosomal protein uS19 family.

Functionally, protein S19 forms a complex with S13 that binds strongly to the 16S ribosomal RNA. The protein is Small ribosomal subunit protein uS19 of Rickettsia felis (strain ATCC VR-1525 / URRWXCal2) (Rickettsia azadi).